The primary structure comprises 957 residues: Bifunctional glutamine synthetase adenylyltransferase/adenylyl-removing enzyme (957 aa).

Positions 1–449 (MTQHLERPEL…VFDDIIGTDE (449 aa)) are adenylyl removase. The segment at 457–957 (SEQYNEMWTM…QEYLVPSSDE (501 aa)) is adenylyl transferase.

The protein belongs to the GlnE family. Mg(2+) is required as a cofactor.

It catalyses the reaction [glutamine synthetase]-O(4)-(5'-adenylyl)-L-tyrosine + phosphate = [glutamine synthetase]-L-tyrosine + ADP. The enzyme catalyses [glutamine synthetase]-L-tyrosine + ATP = [glutamine synthetase]-O(4)-(5'-adenylyl)-L-tyrosine + diphosphate. Its function is as follows. Involved in the regulation of glutamine synthetase GlnA, a key enzyme in the process to assimilate ammonia. When cellular nitrogen levels are high, the C-terminal adenylyl transferase (AT) inactivates GlnA by covalent transfer of an adenylyl group from ATP to specific tyrosine residue of GlnA, thus reducing its activity. Conversely, when nitrogen levels are low, the N-terminal adenylyl removase (AR) activates GlnA by removing the adenylyl group by phosphorolysis, increasing its activity. The regulatory region of GlnE binds the signal transduction protein PII (GlnB) which indicates the nitrogen status of the cell. The sequence is that of Bifunctional glutamine synthetase adenylyltransferase/adenylyl-removing enzyme from Photobacterium profundum (strain SS9).